Consider the following 217-residue polypeptide: Secreted RxLR effector protein 147 (217 aa).

A signal peptide spans 1–23 (MRGAFYVTTALLITNSIRTAAEA). Residues 22-52 (EANPPGRQPMSHHDGVVPGKSSPRRFLQGSH) are disordered. The short motif at 46-67 (RFLQGSHEPHDKFAVSAANEER) is the RxLR-dEER element.

This sequence belongs to the RxLR effector family.

It is found in the secreted. The protein resides in the host nucleus. Its subcellular location is the host cytoplasm. Its function is as follows. Secreted effector that completely suppresses the host cell death induced by cell death-inducing proteins. This is Secreted RxLR effector protein 147 from Plasmopara viticola (Downy mildew of grapevine).